A 334-amino-acid chain; its full sequence is Pre-mRNA leakage protein 39 (334 aa).

Interacts with MLP1 and MLP2.

The protein localises to the nucleus membrane. Its function is as follows. Involved in the nuclear retention of improperly spliced pre-mRNAs. In Saccharomyces cerevisiae (strain ATCC 204508 / S288c) (Baker's yeast), this protein is Pre-mRNA leakage protein 39 (PML39).